The following is a 1111-amino-acid chain: Zinc finger protein GLI1 (1111 aa).

Residues 52–78 (GYGAARETSSCTEGSLFPPPPPPRSSV) form a disordered region. Residues 123–127 (SYGHL) are interaction with SUFU. 5 C2H2-type zinc fingers span residues 238-263 (TDCR…NSEH), 271-298 (FVCH…MRRH), 304-328 (HKCT…LRSH), 334-359 (YMCE…NRTH), and 365-390 (YVCK…KTVH). Residues 286–294 (KAQYMLVVH) are interaction with DNA. Interaction with DNA stretches follow at residues 348-353 (ASDRAK) and 378-384 (DPSSLRK). Residues 378–487 (DPSSLRKHVK…EDLSSLDEGP (110 aa)) are disordered. The span at 416–431 (EPKREREGGSGREESR) shows a compositional bias: basic and acidic residues. Residues 439–465 (MPQQSPGAQSSCSSDHSPAGSAANTDS) are compositionally biased toward polar residues. Lysine 520 bears the N6-acetyllysine mark. Disordered regions lie at residues 528 to 583 (GAPV…LPGL), 598 to 649 (ARGS…RAAD), 673 to 692 (TGRN…QPPS), and 832 to 891 (PCLN…SSHS). The span at 546–562 (SSSSSMSSAYTVSRRSS) shows a compositional bias: low complexity. Basic and acidic residues predominate over residues 640 to 649 (RASDPARAAD). Residues 855-870 (LPQPQYPQSGPYPQPP) are compositionally biased toward pro residues. Residue lysine 1008 forms a Glycyl lysine isopeptide (Lys-Gly) (interchain with G-Cter in SUMO2) linkage. The interval 1064-1093 (LSPPLSHEQGDSSKNTPSPSGPPNMAVGNM) is disordered.

It belongs to the GLI C2H2-type zinc-finger protein family. As to quaternary structure, interacts with KIF7. Interacts with STK36. Interacts with ZIC1; the interaction enhances transcription activation. Interacts with SUFU; this inhibits transcriptional activation by GLI1. Phosphorylated in vitro by ULK3. In terms of processing, acetylation at Lys-520 down-regulates transcriptional activity. Deacetylated by HDAC1. Post-translationally, ubiquitinated by the CRL2(FEM1B) complex, suppressing GLI1 transcriptional activator activity.

The protein resides in the cytoplasm. It is found in the nucleus. Its function is as follows. Acts as a transcriptional activator. Binds to the DNA consensus sequence 5'-GACCACCCA-3'. Regulates the transcription of specific genes during normal development. Plays a role in craniofacial development and digital development, as well as development of the central nervous system and gastrointestinal tract. Mediates SHH signaling. Plays a role in cell proliferation and differentiation via its role in SHH signaling. The sequence is that of Zinc finger protein GLI1 (Gli1) from Mus musculus (Mouse).